Reading from the N-terminus, the 308-residue chain is D-alanine--D-alanine ligase (308 aa).

The region spanning 102–302 (KKVAAAAGIP…FGDLVSWMVE (201 aa)) is the ATP-grasp domain. Residue 128–183 (PLQPPYVVKPVREGSSFGVVIVKEDQSHPPQILTSSEWPFGNQVMVERYIHGRELT) coordinates ATP. Mg(2+) is bound by residues Asp252, Glu269, and Asn271.

Belongs to the D-alanine--D-alanine ligase family. Mg(2+) is required as a cofactor. Requires Mn(2+) as cofactor.

It localises to the cytoplasm. The catalysed reaction is 2 D-alanine + ATP = D-alanyl-D-alanine + ADP + phosphate + H(+). It participates in cell wall biogenesis; peptidoglycan biosynthesis. Its function is as follows. Cell wall formation. The polypeptide is D-alanine--D-alanine ligase (Agrobacterium fabrum (strain C58 / ATCC 33970) (Agrobacterium tumefaciens (strain C58))).